The following is a 140-amino-acid chain: MTNRTIIAFDFGTKSIGAAIGQELTGSARALAAFKAQDGSPDWQKIEKLLKEWQPDLVVVGLPLNMDGTEQLVTEQARKFANRLHGRFGVQIALHDERLSTVEARANLFDRGGFRALDKGSVDSASAVVILESWFERQLG.

The protein belongs to the YqgF nuclease family.

It localises to the cytoplasm. Functionally, could be a nuclease involved in processing of the 5'-end of pre-16S rRNA. The sequence is that of Putative pre-16S rRNA nuclease from Serratia proteamaculans (strain 568).